Consider the following 330-residue polypeptide: SUMO-activating enzyme subunit 1 (330 aa).

Belongs to the ubiquitin-activating E1 family. As to quaternary structure, heterodimer of sae1 and sae2. The complex binds sumo via sae2.

The protein localises to the nucleus. Its pathway is protein modification; protein sumoylation. Its function is as follows. The dimeric enzyme acts as an E1 ligase for sumo. It mediates ATP-dependent activation of sumo and formation of a thioester with a conserved cysteine residue on sae2. The sequence is that of SUMO-activating enzyme subunit 1 (sae1) from Dictyostelium discoideum (Social amoeba).